Consider the following 331-residue polypeptide: Hyaluronidase (331 aa).

Disulfide bonds link Cys19–Cys308 and Cys185–Cys197. Residue Asn79 is glycosylated (N-linked (GlcNAc...) asparagine). Glu109 functions as the Proton donor in the catalytic mechanism. A glycan (N-linked (GlcNAc...) asparagine) is linked at Asn325.

This sequence belongs to the glycosyl hydrolase 56 family. As to expression, expressed by the venom gland.

The protein localises to the secreted. The catalysed reaction is Random hydrolysis of (1-&gt;4)-linkages between N-acetyl-beta-D-glucosamine and D-glucuronate residues in hyaluronate.. Functionally, hydrolyzes high molecular weight hyaluronic acid to produce small oligosaccharides. This chain is Hyaluronidase, found in Dolichovespula maculata (Bald-faced hornet).